Here is a 369-residue protein sequence, read N- to C-terminus: Methionine import ATP-binding protein MetN 1 (369 aa).

Positions 1–26 are disordered; that stretch reads MTTMTVPPSLLPLEPFPTAPDTRAST. The ABC transporter domain maps to 29–265; it reads IRLHGLGKRY…PRHAVTRSLL (237 aa). 62 to 69 serves as a coordination point for ATP; that stretch reads GRSGAGKS.

Belongs to the ABC transporter superfamily. Methionine importer (TC 3.A.1.24) family. The complex is composed of two ATP-binding proteins (MetN), two transmembrane proteins (MetI) and a solute-binding protein (MetQ).

The protein resides in the cell inner membrane. The catalysed reaction is L-methionine(out) + ATP + H2O = L-methionine(in) + ADP + phosphate + H(+). It carries out the reaction D-methionine(out) + ATP + H2O = D-methionine(in) + ADP + phosphate + H(+). Its function is as follows. Part of the ABC transporter complex MetNIQ involved in methionine import. Responsible for energy coupling to the transport system. This is Methionine import ATP-binding protein MetN 1 from Pseudomonas aeruginosa (strain UCBPP-PA14).